The chain runs to 504 residues: Maturase K (504 aa).

The protein belongs to the intron maturase 2 family. MatK subfamily.

The protein resides in the plastid. It localises to the chloroplast. Its function is as follows. Usually encoded in the trnK tRNA gene intron. Probably assists in splicing its own and other chloroplast group II introns. The chain is Maturase K from Wollastonia biflora (Beach sunflower).